Here is a 472-residue protein sequence, read N- to C-terminus: Glycerol-3-phosphate acyltransferase, chloroplastic (472 aa).

The N-terminal 102 residues, 1-102 (MLVLSSSAPP…EIPVKKEDDN (102 aa)), are a transit peptide targeting the chloroplast. An HXXXXD motif motif is present at residues 241–246 (HQSEAD).

It belongs to the GPAT/DAPAT family.

It is found in the plastid. The protein localises to the chloroplast stroma. It catalyses the reaction sn-glycerol 3-phosphate + an acyl-CoA = a 1-acyl-sn-glycero-3-phosphate + CoA. Its pathway is phospholipid metabolism; CDP-diacylglycerol biosynthesis; CDP-diacylglycerol from sn-glycerol 3-phosphate: step 1/3. Esterifies acyl-group from acyl-ACP to the sn-1 position of glycerol-3-phosphate. The enzyme from chilling-resistant plants discriminates against non-fluid palmitic acid and selects oleic acid whereas the enzyme from sensitive plants accepts both fatty acids. This is an oleate-selective acyltransferase. This chain is Glycerol-3-phosphate acyltransferase, chloroplastic (GAT), found in Spinacia oleracea (Spinach).